Reading from the N-terminus, the 189-residue chain is Crossover junction endodeoxyribonuclease RuvC (189 aa).

Catalysis depends on residues Asp-8, Glu-67, and Asp-139. Asp-8, Glu-67, and Asp-139 together coordinate Mg(2+).

It belongs to the RuvC family. In terms of assembly, homodimer which binds Holliday junction (HJ) DNA. The HJ becomes 2-fold symmetrical on binding to RuvC with unstacked arms; it has a different conformation from HJ DNA in complex with RuvA. In the full resolvosome a probable DNA-RuvA(4)-RuvB(12)-RuvC(2) complex forms which resolves the HJ. The cofactor is Mg(2+).

The protein localises to the cytoplasm. The catalysed reaction is Endonucleolytic cleavage at a junction such as a reciprocal single-stranded crossover between two homologous DNA duplexes (Holliday junction).. In terms of biological role, the RuvA-RuvB-RuvC complex processes Holliday junction (HJ) DNA during genetic recombination and DNA repair. Endonuclease that resolves HJ intermediates. Cleaves cruciform DNA by making single-stranded nicks across the HJ at symmetrical positions within the homologous arms, yielding a 5'-phosphate and a 3'-hydroxyl group; requires a central core of homology in the junction. The consensus cleavage sequence is 5'-(A/T)TT(C/G)-3'. Cleavage occurs on the 3'-side of the TT dinucleotide at the point of strand exchange. HJ branch migration catalyzed by RuvA-RuvB allows RuvC to scan DNA until it finds its consensus sequence, where it cleaves and resolves the cruciform DNA. This chain is Crossover junction endodeoxyribonuclease RuvC, found in Histophilus somni (strain 129Pt) (Haemophilus somnus).